A 191-amino-acid chain; its full sequence is Ribonuclease HII (191 aa).

The 185-residue stretch at 7–191 folds into the RNase H type-2 domain; sequence ILMAGVDEVG…YSPVADLISK (185 aa). Aspartate 13, glutamate 14, and aspartate 103 together coordinate a divalent metal cation.

This sequence belongs to the RNase HII family. Mn(2+) serves as cofactor. Mg(2+) is required as a cofactor.

The protein resides in the cytoplasm. The catalysed reaction is Endonucleolytic cleavage to 5'-phosphomonoester.. Endonuclease that specifically degrades the RNA of RNA-DNA hybrids. The polypeptide is Ribonuclease HII (Legionella pneumophila (strain Paris)).